We begin with the raw amino-acid sequence, 208 residues long: Thymidylate kinase (208 aa).

Residue 9-16 coordinates ATP; that stretch reads GGEGCGKS.

This sequence belongs to the thymidylate kinase family.

It carries out the reaction dTMP + ATP = dTDP + ADP. Phosphorylation of dTMP to form dTDP in both de novo and salvage pathways of dTTP synthesis. The sequence is that of Thymidylate kinase from Dehalococcoides mccartyi (strain ATCC BAA-2100 / JCM 16839 / KCTC 5957 / BAV1).